Reading from the N-terminus, the 186-residue chain is Elongation factor P (186 aa).

The protein belongs to the elongation factor P family.

The protein localises to the cytoplasm. It functions in the pathway protein biosynthesis; polypeptide chain elongation. In terms of biological role, involved in peptide bond synthesis. Stimulates efficient translation and peptide-bond synthesis on native or reconstituted 70S ribosomes in vitro. Probably functions indirectly by altering the affinity of the ribosome for aminoacyl-tRNA, thus increasing their reactivity as acceptors for peptidyl transferase. The sequence is that of Elongation factor P from Streptococcus pneumoniae (strain Hungary19A-6).